The following is a 341-amino-acid chain: Tetraacyldisaccharide 4'-kinase (341 aa).

Thr54–Thr61 contacts ATP.

The protein belongs to the LpxK family.

It catalyses the reaction a lipid A disaccharide + ATP = a lipid IVA + ADP + H(+). It participates in glycolipid biosynthesis; lipid IV(A) biosynthesis; lipid IV(A) from (3R)-3-hydroxytetradecanoyl-[acyl-carrier-protein] and UDP-N-acetyl-alpha-D-glucosamine: step 6/6. Functionally, transfers the gamma-phosphate of ATP to the 4'-position of a tetraacyldisaccharide 1-phosphate intermediate (termed DS-1-P) to form tetraacyldisaccharide 1,4'-bis-phosphate (lipid IVA). The polypeptide is Tetraacyldisaccharide 4'-kinase (Brucella suis (strain ATCC 23445 / NCTC 10510)).